Here is a 275-residue protein sequence, read N- to C-terminus: HUWE1-associated protein modifying stress responses (275 aa).

Acidic residues predominate over residues 32–44 (AEQDEQLSPELQE). Disordered stretches follow at residues 32–51 (AEQD…AAAQ), 155–181 (RNSR…SSVE), 204–228 (SVRS…RRNG), and 250–275 (GTRK…NRML). Residue Ser-167 is modified to Phosphoserine. A compositionally biased stretch (low complexity) spans 172 to 181 (TSTETSSSVE). The segment covering 204-221 (SVRSSTPGSPTHVSSGPN) has biased composition (polar residues). Ser-212 is subject to Phosphoserine.

The protein belongs to the HAPSTR1 family. Homooligomer. Heterooligomer with HAPSTR2; the interaction is direct and stabilizes HAPSTR1. Interacts with HUWE1. In terms of processing, ubiquitinated by HUWE1. Promotes HAPSTR1 degradation through polyubiquitination.

It is found in the nucleus. It localises to the cytoplasm. Its function is as follows. Acts as a central player within a network of stress response pathways promoting cellular adaptability. The E3 ligase HUWE1 assists HAPSTR1 in controlling stress signaling and in turn, HUWE1 feeds back to promote the degradation of HAPSTR1. HAPSTR1 represents a central coordination mechanism for stress response programs. Functions as a negative regulator of TP53/P53 in the cellular response to telomere erosion and probably also DNA damage. May attenuate p53/TP53 activation through the E3 ubiquitin ligase HUWE1. This is HUWE1-associated protein modifying stress responses from Mus musculus (Mouse).